Reading from the N-terminus, the 153-residue chain is Prefoldin subunit alpha (153 aa).

The protein belongs to the prefoldin subunit alpha family. Heterohexamer of two alpha and four beta subunits.

It is found in the cytoplasm. In terms of biological role, molecular chaperone capable of stabilizing a range of proteins. Seems to fulfill an ATP-independent, HSP70-like function in archaeal de novo protein folding. The protein is Prefoldin subunit alpha of Methanothrix thermoacetophila (strain DSM 6194 / JCM 14653 / NBRC 101360 / PT) (Methanosaeta thermophila).